A 199-amino-acid chain; its full sequence is Recombination protein RecR (199 aa).

The C4-type zinc finger occupies 58-73 (CKKCFNLTSEEECDIC). One can recognise a Toprim domain in the interval 81 to 175 (NIICVVAETK…KVTRIAYGLP (95 aa)).

It belongs to the RecR family.

Functionally, may play a role in DNA repair. It seems to be involved in an RecBC-independent recombinational process of DNA repair. It may act with RecF and RecO. The chain is Recombination protein RecR from Prochlorococcus marinus (strain MIT 9515).